We begin with the raw amino-acid sequence, 162 residues long: Crossover junction endodeoxyribonuclease RuvC (162 aa).

Catalysis depends on residues Asp7, Glu67, and Asp140. The Mg(2+) site is built by Asp7, Glu67, and Asp140.

It belongs to the RuvC family. Homodimer which binds Holliday junction (HJ) DNA. The HJ becomes 2-fold symmetrical on binding to RuvC with unstacked arms; it has a different conformation from HJ DNA in complex with RuvA. In the full resolvosome a probable DNA-RuvA(4)-RuvB(12)-RuvC(2) complex forms which resolves the HJ. It depends on Mg(2+) as a cofactor.

It localises to the cytoplasm. It catalyses the reaction Endonucleolytic cleavage at a junction such as a reciprocal single-stranded crossover between two homologous DNA duplexes (Holliday junction).. The RuvA-RuvB-RuvC complex processes Holliday junction (HJ) DNA during genetic recombination and DNA repair. Endonuclease that resolves HJ intermediates. Cleaves cruciform DNA by making single-stranded nicks across the HJ at symmetrical positions within the homologous arms, yielding a 5'-phosphate and a 3'-hydroxyl group; requires a central core of homology in the junction. The consensus cleavage sequence is 5'-(A/T)TT(C/G)-3'. Cleavage occurs on the 3'-side of the TT dinucleotide at the point of strand exchange. HJ branch migration catalyzed by RuvA-RuvB allows RuvC to scan DNA until it finds its consensus sequence, where it cleaves and resolves the cruciform DNA. This chain is Crossover junction endodeoxyribonuclease RuvC, found in Heliobacterium modesticaldum (strain ATCC 51547 / Ice1).